A 458-amino-acid polypeptide reads, in one-letter code: Maturase-like protein 1 (458 aa).

The protein to group II intron maturases.

It localises to the plastid. It is found in the chloroplast. Could be required for group III intron excision. This chain is Maturase-like protein 1 (mat1), found in Euglena gracilis.